A 239-amino-acid chain; its full sequence is MIKVLIVDDEPLARENLRVFLQEQSDIEIVGECSNAVEGIGAVHKLRPDVLFLDIQMPRISGLEMVGMLDPEHRPYIVFLTAFDEYAIKAFEEHAFDYLLKPIDEARLEKTLARLRQERSKQDVSLLPENQQALKFIPCTGHSRIYLLQMKDVAFVSSRMSGVYVTSHEGKEGFTELTLRTLESRTPLLRCHRQYLVNLAHLQEIRLEDNGQAELILRNGLTVPVSRRYLKSLKEAIGL.

The 114-residue stretch at 3-116 (KVLIVDDEPL…RLEKTLARLR (114 aa)) folds into the Response regulatory domain. At aspartate 54 the chain carries 4-aspartylphosphate. The HTH LytTR-type domain occupies 137 to 239 (IPCTGHSRIY…LKSLKEAIGL (103 aa)).

Phosphorylated by BtsS.

Functionally, member of the two-component regulatory system BtsS/BtsR. BtsR regulates expression of btsT by binding to its promoter region. This is Transcriptional regulatory protein BtsR from Escherichia coli O6:H1 (strain CFT073 / ATCC 700928 / UPEC).